The following is a 215-amino-acid chain: Thiamine-phosphate synthase (215 aa).

Residues 37 to 41 (QLRIK) and Asn-69 contribute to the 4-amino-2-methyl-5-(diphosphooxymethyl)pyrimidine site. Mg(2+) contacts are provided by Asp-70 and Asp-89. Ser-108 is a binding site for 4-amino-2-methyl-5-(diphosphooxymethyl)pyrimidine. 134–136 (TQT) contacts 2-[(2R,5Z)-2-carboxy-4-methylthiazol-5(2H)-ylidene]ethyl phosphate. Lys-137 serves as a coordination point for 4-amino-2-methyl-5-(diphosphooxymethyl)pyrimidine. 2-[(2R,5Z)-2-carboxy-4-methylthiazol-5(2H)-ylidene]ethyl phosphate-binding positions include Gly-166 and 186 to 187 (VS).

This sequence belongs to the thiamine-phosphate synthase family. It depends on Mg(2+) as a cofactor.

The catalysed reaction is 2-[(2R,5Z)-2-carboxy-4-methylthiazol-5(2H)-ylidene]ethyl phosphate + 4-amino-2-methyl-5-(diphosphooxymethyl)pyrimidine + 2 H(+) = thiamine phosphate + CO2 + diphosphate. It catalyses the reaction 2-(2-carboxy-4-methylthiazol-5-yl)ethyl phosphate + 4-amino-2-methyl-5-(diphosphooxymethyl)pyrimidine + 2 H(+) = thiamine phosphate + CO2 + diphosphate. It carries out the reaction 4-methyl-5-(2-phosphooxyethyl)-thiazole + 4-amino-2-methyl-5-(diphosphooxymethyl)pyrimidine + H(+) = thiamine phosphate + diphosphate. Its pathway is cofactor biosynthesis; thiamine diphosphate biosynthesis; thiamine phosphate from 4-amino-2-methyl-5-diphosphomethylpyrimidine and 4-methyl-5-(2-phosphoethyl)-thiazole: step 1/1. Its function is as follows. Condenses 4-methyl-5-(beta-hydroxyethyl)thiazole monophosphate (THZ-P) and 2-methyl-4-amino-5-hydroxymethyl pyrimidine pyrophosphate (HMP-PP) to form thiamine monophosphate (TMP). This chain is Thiamine-phosphate synthase, found in Yersinia pestis (strain Pestoides F).